We begin with the raw amino-acid sequence, 325 residues long: NADH-quinone oxidoreductase subunit H (325 aa).

8 helical membrane-spanning segments follow: residues Val8–Cys28, Gly81–Val101, Ile114–Gly134, Phe159–Ile179, Leu186–Val206, Phe237–Phe257, Leu265–Ile285, and Ile304–Ala324.

The protein belongs to the complex I subunit 1 family. NDH-1 is composed of 13 different subunits. Subunits NuoA, H, J, K, L, M, N constitute the membrane sector of the complex.

The protein resides in the cell inner membrane. The enzyme catalyses a quinone + NADH + 5 H(+)(in) = a quinol + NAD(+) + 4 H(+)(out). Functionally, NDH-1 shuttles electrons from NADH, via FMN and iron-sulfur (Fe-S) centers, to quinones in the respiratory chain. The immediate electron acceptor for the enzyme in this species is believed to be ubiquinone. Couples the redox reaction to proton translocation (for every two electrons transferred, four hydrogen ions are translocated across the cytoplasmic membrane), and thus conserves the redox energy in a proton gradient. This subunit may bind ubiquinone. This chain is NADH-quinone oxidoreductase subunit H, found in Sodalis glossinidius (strain morsitans).